We begin with the raw amino-acid sequence, 166 residues long: Regulatory protein RecX (166 aa).

It belongs to the RecX family.

It localises to the cytoplasm. Its function is as follows. Modulates RecA activity. In Salmonella paratyphi A (strain ATCC 9150 / SARB42), this protein is Regulatory protein RecX.